The chain runs to 437 residues: MVGFITLAVFIATFAVIYRWAEGSHLAVLAGAAVLVVIGTISGTYTPRMAVQSIYFETLALIFGMAAISALLARSGVYAYLAAGTAELSQGQGRWILVMMALVTYGISLASNSLITVAVVVPVTLTVCFRTGIDPVPVIIAEIIAANLGGSSTMIGDFPNMILASAGKLHFNDFIGGMMPACLILLAVTFLFFEYRQGDWKKAEIPVDLAWVRGEQLRYSDIDHRLLRYGLIIFFITVIGLVLAGPLKVRPGWIAFVAGLTALALGRFKDEEFFSACGGSDILFFGGLFVMVGALTSVGILDWAVAWLEGVTAGHDRVRAILLMWMAAGVTIFVGGGTSAAVFAPVAATLRLDGDGQAAWWALALGIMAGSCAALSGATAGALAMNQYSGFVKRHPELASAAAAGLQFTHREYVRWGLPLMGIFLVLSTVYIAVLAG.

11 helical membrane passes run 26 to 46 (LAVL…GTYT), 53 to 73 (SIYF…ALLA), 95 to 115 (WILV…NSLI), 136 to 156 (VPVI…TMIG), 174 to 194 (FIGG…LFFE), 229 to 249 (YGLI…PLKV), 252 to 268 (GWIA…LGRF), 281 to 301 (DILF…VGIL), 320 to 340 (AILL…GTSA), 358 to 378 (AAWW…LSGA), and 416 to 436 (WGLP…AVLA).

It belongs to the arsenite-antimonite (ArsB) efflux (TC 2.A.45) family.

Its subcellular location is the magnetosome membrane. Plays a role in biomineralization; might regulate pH in the magnetosome. The polypeptide is Magnetosome protein MamN (Magnetospirillum gryphiswaldense (strain DSM 6361 / JCM 21280 / NBRC 15271 / MSR-1)).